The sequence spans 68 residues: Phycobilisome 7.8 kDa linker polypeptide, allophycocyanin-associated, core (68 aa).

The 56-residue stretch at 2-57 folds into the CpcD-like domain; sequence SRLFKITALVPSLSRTRTQRELQNTYFTKLVPYENWFREQQRIQKAGGKIIKVELA.

It belongs to the phycobilisome linker protein family.

Its subcellular location is the cellular thylakoid membrane. In terms of biological role, rod linker protein, associated with allophycocyanin. Linker polypeptides determine the state of aggregation and the location of the disk-shaped phycobiliprotein units within the phycobilisome and modulate their spectroscopic properties in order to mediate a directed and optimal energy transfer. This is Phycobilisome 7.8 kDa linker polypeptide, allophycocyanin-associated, core (apcC) from Nostoc sp. (strain PCC 7120 / SAG 25.82 / UTEX 2576).